A 31-amino-acid chain; its full sequence is Putative gene 37 protein (31 aa).

The chain is Putative gene 37 protein (37) from Bacillus subtilis (Bacteriophage SP01).